We begin with the raw amino-acid sequence, 115 residues long: Protein SPIRAL1-like 2 (115 aa).

The tract at residues 29-48 (AKAKPAAAAEKETTPAPVKK) is disordered.

The protein belongs to the SPIRAL1 family.

Its function is as follows. Acts in maintaining the cortical microtubules organization essential for anisotropic cell growth. The polypeptide is Protein SPIRAL1-like 2 (Oryza sativa subsp. japonica (Rice)).